The following is a 625-amino-acid chain: Alpha-protein kinase vwkA (625 aa).

Positions 1–15 are enriched in basic and acidic residues; it reads MESKYVLSTEKESKT. Residues 1-64 are disordered; that stretch reads MESKYVLSTE…GLSSGGSKTH (64 aa). Polar residues-rich tracts occupy residues 25 to 39 and 46 to 63; these read DMDSISNSLSKTSLG and SLKTDASRSGLSSGGSKT. The stretch at 87–114 forms a coiled coil; it reads TKDSITLAKEKEKKIEKRNEEIKLTFKA. The VWFA domain occupies 122–322; sequence DLLFIVDCTG…KMNERIFISI (201 aa). Positions 386–600 constitute an Alpha-type protein kinase domain; sequence TCLSSSYEMK…HCKKLGLTIP (215 aa). 570–576 lines the ATP pocket; sequence GSCNLGK. Positions 602–625 are disordered; the sequence is FTSSSSTSSSSRSTSSSSSISYSY.

Belongs to the protein kinase superfamily. Alpha-type protein kinase family. ALPK subfamily. As to quaternary structure, interacts with calmodulin; in the presence of calcium. Post-translationally, autophosphorylated, in vitro.

Its subcellular location is the cytoplasm. The protein localises to the cytosol. It is found in the perinuclear region. The protein resides in the contractile vacuole membrane. It carries out the reaction L-seryl-[protein] + ATP = O-phospho-L-seryl-[protein] + ADP + H(+). It catalyses the reaction L-threonyl-[protein] + ATP = O-phospho-L-threonyl-[protein] + ADP + H(+). Autophosphorylation activity enhanced by calcium/calmodulin. Functionally, displays a modest preference for threonine over serine residues. Does not phosphorylate myosin II, however can phosphorylate MBP, in vitro. May be involved in the regulation of myosin II function during cytokinesis. Overexpression leads to impaired cell proliferation in suspension culture and fails to develop beyond the mound stage. Both overexpression and absence of the gene can result in defects in cytokinesis and alterations in myosin II abundance and assembly. The chain is Alpha-protein kinase vwkA (vwkA) from Dictyostelium discoideum (Social amoeba).